The primary structure comprises 60 residues: UPF0434 protein YcaR (60 aa).

The protein belongs to the UPF0434 family.

The chain is UPF0434 protein YcaR from Escherichia coli O139:H28 (strain E24377A / ETEC).